We begin with the raw amino-acid sequence, 253 residues long: Bridging integrator 3 (253 aa).

Positions 9 to 232 (GQPKKQIVSK…LDQPGHSDEH (224 aa)) constitute a BAR domain. Coiled coils occupy residues 16–57 (VSKT…AMSK) and 120–151 (SLNM…KEKT).

It localises to the cytoplasm. The protein localises to the cytoskeleton. In terms of biological role, involved in cytokinesis and septation where it has a role in the localization of F-actin. The polypeptide is Bridging integrator 3 (Bin3) (Rattus norvegicus (Rat)).